Here is a 798-residue protein sequence, read N- to C-terminus: Shutoff protein (798 aa).

The span at 1–14 (MESTADGDKARGEE) shows a compositional bias: basic and acidic residues. Residues 1 to 123 (MESTADGDKA…SHSSDSELGC (123 aa)) form a disordered region. The segment covering 33-49 (APEDEHPDDGEPDEPAD) has biased composition (acidic residues). Residues 68–80 (GGRDAECDGEAAR) show a composition bias toward basic and acidic residues. The segment covering 86-105 (DESSAPTTPSTAVRRSSGES) has biased composition (polar residues). A binding to host EIF4G region spans residues 309–376 (LMEVLLQPFA…GRPLYRSARA (68 aa)). One can recognise an RRM domain in the interval 379–497 (SVFREPSSIK…AIYALETPTE (119 aa)). Phosphotyrosine; by host is present on Y711. Residues 740–798 (YADHARGAATSAEPSRALRPTSVATAAGNRTRGCSSARYRLGPTLRRRSNSSWPREWST) are disordered. Residues 789–798 (NSSWPREWST) are compositionally biased toward polar residues.

The protein belongs to the adenoviridae shutoff protein family. In terms of assembly, monomer. Interacts with hexon protein; this interaction allows chaperoning and trimerization of hexon proteins. Interacts (via N-terminus) with host initiation factor EIF4G (via C-terminus). Interacts (via RRM domain) with viral mRNAs that contain the tripartite leader; this interaction allows ribosome shunting and expression of viral late mRNAs. Might be cleaved by the viral protease. Post-translationally, phosphorylated. Tyrosine phosphorylation enhances preferential binding to tripartite leader mRNAs and allows ribosome shunting. In terms of processing, methylated. Asymmetric dimethylation by host PRMT1 of the Arg/Gly-rich region may regulate shutoff protein binding to hexon and promote the capsid assembly in the nucleus.

It is found in the host cytoplasm. Functionally, protein that inhibits host translation while promoting late viral translation by ribosome shunting. Blocks host cap-dependent translation by binding to eIF4G, displacing MKNK1 from cap initiation complexes and preventing EIF4E phosphorylation. Binds to the tripartite leader sequence of viral late mRNAs and recruits host eIF4G, PABPC1/poly-A binding protein and 40S ribosomes subunits on viral mRNAs, allowing ribosome shunting and efficient translation of late viral mRNAs even though conventional translation via ribosome scanning from the cap has been shut off in the host cell. During assembly, acts as a chaperone protein that helps hexon proteins assembly into trimers. The sequence is that of Shutoff protein from Galliformes (FAdV-10).